The chain runs to 689 residues: Polyribonucleotide nucleotidyltransferase (689 aa).

The Mg(2+) site is built by Asp482 and Asp488. Residues 549–608 (PRMITLTIPQNKIGELIGPGGKNIRKIQEDNNVKIDIEETGRVFISGVESDGVKSAKEYV) form the KH domain. Residues 618 to 686 (GKIYKSRVTK…KQGRINLSIK (69 aa)) enclose the S1 motif domain.

It belongs to the polyribonucleotide nucleotidyltransferase family. Mg(2+) is required as a cofactor.

Its subcellular location is the cytoplasm. It carries out the reaction RNA(n+1) + phosphate = RNA(n) + a ribonucleoside 5'-diphosphate. In terms of biological role, involved in mRNA degradation. Catalyzes the phosphorolysis of single-stranded polyribonucleotides processively in the 3'- to 5'-direction. The polypeptide is Polyribonucleotide nucleotidyltransferase (Endomicrobium trichonymphae).